The following is a 386-amino-acid chain: Succinate--CoA ligase [ADP-forming] subunit beta (386 aa).

The 236-residue stretch at 9 to 244 (KQVLRSSNLN…DSQIDAKEAA (236 aa)) folds into the ATP-grasp domain. ATP is bound by residues lysine 46, 53–55 (GRG), glutamate 99, leucine 102, and glutamate 107. 2 residues coordinate Mg(2+): asparagine 199 and aspartate 213. Substrate is bound by residues asparagine 264 and 321–323 (GIV).

It belongs to the succinate/malate CoA ligase beta subunit family. As to quaternary structure, heterotetramer of two alpha and two beta subunits. Mg(2+) is required as a cofactor.

The enzyme catalyses succinate + ATP + CoA = succinyl-CoA + ADP + phosphate. The catalysed reaction is GTP + succinate + CoA = succinyl-CoA + GDP + phosphate. Its pathway is carbohydrate metabolism; tricarboxylic acid cycle; succinate from succinyl-CoA (ligase route): step 1/1. Succinyl-CoA synthetase functions in the citric acid cycle (TCA), coupling the hydrolysis of succinyl-CoA to the synthesis of either ATP or GTP and thus represents the only step of substrate-level phosphorylation in the TCA. The beta subunit provides nucleotide specificity of the enzyme and binds the substrate succinate, while the binding sites for coenzyme A and phosphate are found in the alpha subunit. The sequence is that of Succinate--CoA ligase [ADP-forming] subunit beta from Thiobacillus denitrificans (strain ATCC 25259 / T1).